Consider the following 74-residue polypeptide: uncharacterized protein (74 aa).

This is an uncharacterized protein from Staphylococcus aureus.